The following is a 379-amino-acid chain: Alanine racemase (379 aa).

The Proton acceptor; specific for D-alanine role is filled by Lys37. The residue at position 37 (Lys37) is an N6-(pyridoxal phosphate)lysine. Position 137 (Arg137) interacts with substrate. The Proton acceptor; specific for L-alanine role is filled by Tyr269. Position 317 (Met317) interacts with substrate.

The protein belongs to the alanine racemase family. The cofactor is pyridoxal 5'-phosphate.

The catalysed reaction is L-alanine = D-alanine. Its pathway is amino-acid biosynthesis; D-alanine biosynthesis; D-alanine from L-alanine: step 1/1. Catalyzes the interconversion of L-alanine and D-alanine. May also act on other amino acids. This is Alanine racemase (alr) from Geobacter sp. (strain M21).